A 142-amino-acid chain; its full sequence is MASTSASSQPSTLYQLCKDFGLTLRNLQICCIWCKNHLTSAEAYAYHFKDLHVVWKKGFPYAACAFCLEFYSKVCALRHYDRSAFWHTVEQETGLLLEEQIIRCAICQKPLSPSEKDHHIYNGRHFRFILNRWTGRCTQCRE.

2 zinc fingers span residues 31 to 67 (CIWC…CAFC) and 104 to 140 (CAIC…CTQC).

Belongs to the papillomaviridae E6 protein family. As to quaternary structure, forms homodimers. Interacts with ubiquitin-protein ligase UBE3A/E6-AP; this interaction stimulates UBE3A ubiquitin activity. Interacts with host TP53 and EP300; this interaction inhibits TP53 activity.

The protein resides in the host cytoplasm. It is found in the host nucleus. Functionally, plays a major role in the induction and maintenance of cellular transformation. E6 associates with host UBE3A/E6-AP ubiquitin-protein ligase and modulates its activity. Sequesters tumor suppressor TP53 in the host cytoplasm and modulates its activity by interacting with host EP300 that results in the reduction of TP53 acetylation and activation. In turn, apoptosis induced by DNA damage is inhibited. E6 also protects host keratinocytes from apoptosis by mediating the degradation of host BAK1. May also inhibit host immune response. The sequence is that of Protein E6 from Homo sapiens (Human).